The following is a 538-amino-acid chain: Calcium-dependent protein kinase 8 (538 aa).

A disordered region spans residues 1–26 (MGNCCGTPATAEEGGKRRRRGKQKKA). Gly2 carries N-myristoyl glycine lipidation. Residues 16–25 (KRRRRGKQKK) are compositionally biased toward basic residues. Positions 64–322 (YELGGELGRG…AEQVLEHPWL (259 aa)) constitute a Protein kinase domain. ATP-binding positions include 70-78 (LGRGEFGIT) and Lys93. Asp188 (proton acceptor) is an active-site residue. The segment at 328–358 (MPDIPLGDAVRARLQQFAAMNKLKKKALKVI) is autoinhibitory domain. EF-hand domains are found at residues 365–400 (EEAA…LGNQ), 401–436 (MPDS…VRKI), 437–472 (GNDE…EIDG), and 473–508 (NDED…GTDW). Ca(2+) contacts are provided by Asp378, Ser380, Asn382, Gln384, Asp389, Asp414, Asp416, Asn418, Glu425, Asp450, Asn452, Ser454, Tyr456, Glu461, Asp486, Asp488, Asp490, Lys492, and Glu497.

This sequence belongs to the protein kinase superfamily. Ser/Thr protein kinase family. CDPK subfamily.

The protein localises to the membrane. The enzyme catalyses L-seryl-[protein] + ATP = O-phospho-L-seryl-[protein] + ADP + H(+). It catalyses the reaction L-threonyl-[protein] + ATP = O-phospho-L-threonyl-[protein] + ADP + H(+). Its activity is regulated as follows. Activated by calcium. Autophosphorylation may play an important role in the regulation of the kinase activity. Its function is as follows. May play a role in signal transduction pathways that involve calcium as a second messenger. The polypeptide is Calcium-dependent protein kinase 8 (Oryza sativa subsp. japonica (Rice)).